The following is an 88-amino-acid chain: UPF0213 protein SAG0778 (88 aa).

A GIY-YIG domain is found at 4–80; it reads VPAYMYVLEC…QKTRQAKLTY (77 aa).

Belongs to the UPF0213 family.

The protein is UPF0213 protein SAG0778 of Streptococcus agalactiae serotype V (strain ATCC BAA-611 / 2603 V/R).